The sequence spans 319 residues: Phospho-N-acetylmuramoyl-pentapeptide-transferase (319 aa).

The next 9 membrane-spanning stretches (helical) occupy residues 5–25 (LIAFMISLVLSALLFPWLIIW), 51–71 (TMGGTVFVLSAAVATVAICAY), 79–99 (VWILLVALLGYGIIGFLDDGL), 119–139 (LLVAAGIVLLAASDNFDFALY), 149–169 (VVLFTLFEVFWLVGFSNAVNL), 173–193 (LDGLATGLSFIAYGTYAWLAF), 197–217 (NFGVLVFCMAVMGGLAAFFMF), 224–246 (IFMGDAGSLALGGGLAAVSIFLG), and 299–319 (VDLVFWLVGLVGSGIYLMIWG).

It belongs to the glycosyltransferase 4 family. MraY subfamily. Mg(2+) serves as cofactor.

The protein resides in the cell membrane. It catalyses the reaction UDP-N-acetyl-alpha-D-muramoyl-L-alanyl-gamma-D-glutamyl-L-lysyl-D-alanyl-D-alanine + di-trans,octa-cis-undecaprenyl phosphate = Mur2Ac(oyl-L-Ala-gamma-D-Glu-L-Lys-D-Ala-D-Ala)-di-trans,octa-cis-undecaprenyl diphosphate + UMP. Its pathway is cell wall biogenesis; peptidoglycan biosynthesis. In terms of biological role, catalyzes the initial step of the lipid cycle reactions in the biosynthesis of the cell wall peptidoglycan: transfers peptidoglycan precursor phospho-MurNAc-pentapeptide from UDP-MurNAc-pentapeptide onto the lipid carrier undecaprenyl phosphate, yielding undecaprenyl-pyrophosphoryl-MurNAc-pentapeptide, known as lipid I. This Lactobacillus delbrueckii subsp. bulgaricus (strain ATCC BAA-365 / Lb-18) protein is Phospho-N-acetylmuramoyl-pentapeptide-transferase.